Reading from the N-terminus, the 336-residue chain is Phosphate acyltransferase (336 aa).

Belongs to the PlsX family. As to quaternary structure, homodimer. Probably interacts with PlsY.

It localises to the cytoplasm. The enzyme catalyses a fatty acyl-[ACP] + phosphate = an acyl phosphate + holo-[ACP]. It participates in lipid metabolism; phospholipid metabolism. Catalyzes the reversible formation of acyl-phosphate (acyl-PO(4)) from acyl-[acyl-carrier-protein] (acyl-ACP). This enzyme utilizes acyl-ACP as fatty acyl donor, but not acyl-CoA. The polypeptide is Phosphate acyltransferase (Pseudomonas aeruginosa (strain UCBPP-PA14)).